Here is a 762-residue protein sequence, read N- to C-terminus: Subtilisin-like protease SBT3.11 (762 aa).

Positions 1–16 are cleaved as a signal peptide; the sequence is MMSSIVSWWFFWVISA. Residues 17 to 116 constitute a propeptide, activation peptide; that stretch reads VCILKVEFNI…VTPNTFYELQ (100 aa). The 79-residue stretch at 37-115 folds into the Inhibitor I9 domain; it reads VHIVYLGEKE…QVTPNTFYEL (79 aa). Positions 120–609 constitute a Peptidase S8 domain; it reads TFDYLGLSHS…GGLVNPNKAA (490 aa). The Charge relay system role is filled by aspartate 150. Asparagine 206 carries an N-linked (GlcNAc...) asparagine glycan. Histidine 226 acts as the Charge relay system in catalysis. 2 N-linked (GlcNAc...) asparagine glycosylation sites follow: asparagine 241 and asparagine 371. Serine 540 functions as the Charge relay system in the catalytic mechanism.

It belongs to the peptidase S8 family.

It localises to the secreted. The chain is Subtilisin-like protease SBT3.11 from Arabidopsis thaliana (Mouse-ear cress).